Here is a 272-residue protein sequence, read N- to C-terminus: MNRFKKSKYVIIVFVTVLLVSALLATTYSSTIVTKLGDGISLVDRVVQKPFQWFDSVKSDLAHLTRTYNENESLKKQLYQLEVKSNEVESLKTENEQLRQLLDMKSKLQATKTLAADVIMRSPVSWKQELTLDAGRSKGASENMLAIANGGLIGSVSKVEENSTIVNLLTNTENADKISVKIQHGSTTIYGIIIGYDKENDVLKISQLNSNSDISAGDKVTTGGLGNFNVADIPVGEVVATTHSTDYLTREVTVKLSADTHNVDVIELVGNS.

Topologically, residues 1–8 are cytoplasmic; it reads MNRFKKSK. Residues 9–29 traverse the membrane as a helical segment; that stretch reads YVIIVFVTVLLVSALLATTYS. Residues 30-272 lie on the Extracellular side of the membrane; the sequence is STIVTKLGDG…VDVIELVGNS (243 aa). The stretch at 64–112 forms a coiled coil; sequence LTRTYNENESLKKQLYQLEVKSNEVESLKTENEQLRQLLDMKSKLQATK.

The protein belongs to the MreC family. In terms of assembly, homodimer. Interacts with a number of proteins in the elongasome, including PBP1a (pbpA), PBP1b, PBP2a, PBP2b (penA), StkP, MltG, MreD and RodZ.

Its subcellular location is the cell membrane. Involved in formation and maintenance of cell shape, probably part of the elongasome which synthesizes peripheral peptidoglycan (PG). This Streptococcus pneumoniae (strain ATCC BAA-255 / R6) protein is Cell shape-determining protein MreC.